A 217-amino-acid chain; its full sequence is Octanoyltransferase (217 aa).

One can recognise a BPL/LPL catalytic domain in the interval 34 to 216; it reads SETRDELWLL…AASRASRHDR (183 aa). Substrate contacts are provided by residues 73 to 80, 140 to 142, and 153 to 155; these read RGGQVTWH, ALG, and GLS. C171 acts as the Acyl-thioester intermediate in catalysis.

It belongs to the LipB family.

The protein resides in the cytoplasm. It carries out the reaction octanoyl-[ACP] + L-lysyl-[protein] = N(6)-octanoyl-L-lysyl-[protein] + holo-[ACP] + H(+). The protein operates within protein modification; protein lipoylation via endogenous pathway; protein N(6)-(lipoyl)lysine from octanoyl-[acyl-carrier-protein]: step 1/2. Catalyzes the transfer of endogenously produced octanoic acid from octanoyl-acyl-carrier-protein onto the lipoyl domains of lipoate-dependent enzymes. Lipoyl-ACP can also act as a substrate although octanoyl-ACP is likely to be the physiological substrate. This Halorhodospira halophila (strain DSM 244 / SL1) (Ectothiorhodospira halophila (strain DSM 244 / SL1)) protein is Octanoyltransferase.